The following is a 156-amino-acid chain: Small ribosomal subunit protein uS7 (156 aa).

Belongs to the universal ribosomal protein uS7 family. In terms of assembly, part of the 30S ribosomal subunit. Contacts proteins S9 and S11.

In terms of biological role, one of the primary rRNA binding proteins, it binds directly to 16S rRNA where it nucleates assembly of the head domain of the 30S subunit. Is located at the subunit interface close to the decoding center, probably blocks exit of the E-site tRNA. The polypeptide is Small ribosomal subunit protein uS7 (Mycobacterium leprae (strain TN)).